The following is a 353-amino-acid chain: Polyprenal reductase 2 (353 aa).

Transmembrane regions (helical) follow at residues 11–31, 78–98, 175–195, 234–254, 291–308, and 313–335; these read PLLC…ALPI, FMHF…AIWF, MHIV…LSLA, PLLK…WGSL, YLAE…SGAE, and WFLF…NWYL.

The protein belongs to the steroid 5-alpha reductase family. Polyprenal reductase subfamily.

The protein resides in the cell membrane. The catalysed reaction is a di-trans,poly-cis-dolichal + NADP(+) = a di-trans,poly-cis-polyprenal + NADPH + H(+). The protein operates within protein modification; protein glycosylation. Its function is as follows. Plays a key role in early steps of protein N-linked glycosylation by being involved in the conversion of polyprenol into dolichol. Acts as a polyprenal reductase that mediates the reduction of polyprenal into dolichal in a NADP-dependent mechanism. Dolichols are required for the synthesis of dolichol-linked monosaccharides and the oligosaccharide precursor used for N-glycosylation. This is Polyprenal reductase 2 from Oryza sativa subsp. japonica (Rice).